Reading from the N-terminus, the 461-residue chain is MIPLIGQLYRNNNVVTSIHGRGLINRSVIAIMKAHRFARHRMADDAELSVHETFPILKAMSELKLGAASVDLGKMVAKFKAEGNGRSIEDFVKAELAEVAGKQNGDAREGTDVVLYGFGRIGRLLARILIEKTGGGDGLRLRAIVVRKGAENDLVKRASLLRRDSVHGPFDGTITIDEENNTLTANGNLIQVIYSNDPASIDYTQYGIKNALLVDNTGKWRDAEGLGQHLKCPGIDRVVLTAPGKGALKNIVHGINHTDIGADDKIISAASCTTNAIVPVLKAVNDQYGIVNGHVETVHSYTNDQNLIDNFHKGSRRGRSAPLNMVITKTGAATAAAKALPVLKGKLTGNAIRVPTPNVSMAILNLNLEKATTREEINEYLRQMAMHSDLQKQIDFVSSQEVVSTDFVGSRHAGVVDAEATICNDNRVVLYVWYDNEFGYSCQVVRVMEDMAGVNPPAFPR.

At Thr421 the chain carries Phosphothreonine.

The protein belongs to the glyceraldehyde-3-phosphate dehydrogenase family.

This Pseudomonas aeruginosa (strain UCBPP-PA14) protein is Glyceraldehyde-3-phosphate dehydrogenase-like protein (gap2).